Consider the following 382-residue polypeptide: Homoserine O-succinyltransferase (382 aa).

Residues 51–359 (NAVLICHALS…DAPWGHDAFL (309 aa)) enclose the AB hydrolase-1 domain. Ser157 acts as the Nucleophile in catalysis. Arg227 lines the substrate pocket. Residues Asp322 and His355 contribute to the active site. Asp356 lines the substrate pocket.

It belongs to the AB hydrolase superfamily. MetX family. As to quaternary structure, homodimer.

The protein resides in the cytoplasm. The catalysed reaction is L-homoserine + succinyl-CoA = O-succinyl-L-homoserine + CoA. It functions in the pathway amino-acid biosynthesis; L-methionine biosynthesis via de novo pathway; O-succinyl-L-homoserine from L-homoserine: step 1/1. In terms of biological role, transfers a succinyl group from succinyl-CoA to L-homoserine, forming succinyl-L-homoserine. This Marinobacter nauticus (strain ATCC 700491 / DSM 11845 / VT8) (Marinobacter aquaeolei) protein is Homoserine O-succinyltransferase.